A 402-amino-acid polypeptide reads, in one-letter code: Acetylornithine aminotransferase (402 aa).

Pyridoxal 5'-phosphate-binding positions include 117 to 118 (GA) and Phe-143. Arg-146 is a N(2)-acetyl-L-ornithine binding site. A pyridoxal 5'-phosphate-binding site is contributed by 231–234 (DEVQ). Lys-260 bears the N6-(pyridoxal phosphate)lysine mark. Residue Thr-288 participates in N(2)-acetyl-L-ornithine binding. Thr-289 is a pyridoxal 5'-phosphate binding site.

Belongs to the class-III pyridoxal-phosphate-dependent aminotransferase family. ArgD subfamily. As to quaternary structure, homodimer. It depends on pyridoxal 5'-phosphate as a cofactor.

Its subcellular location is the cytoplasm. The enzyme catalyses N(2)-acetyl-L-ornithine + 2-oxoglutarate = N-acetyl-L-glutamate 5-semialdehyde + L-glutamate. It functions in the pathway amino-acid biosynthesis; L-arginine biosynthesis; N(2)-acetyl-L-ornithine from L-glutamate: step 4/4. This Corynebacterium efficiens (strain DSM 44549 / YS-314 / AJ 12310 / JCM 11189 / NBRC 100395) protein is Acetylornithine aminotransferase.